The chain runs to 458 residues: ATP synthase subunit beta (458 aa).

ATP is bound at residue 148–155 (GGAGVGKT).

It belongs to the ATPase alpha/beta chains family. F-type ATPases have 2 components, CF(1) - the catalytic core - and CF(0) - the membrane proton channel. CF(1) has five subunits: alpha(3), beta(3), gamma(1), delta(1), epsilon(1). CF(0) has three main subunits: a(1), b(2) and c(9-12). The alpha and beta chains form an alternating ring which encloses part of the gamma chain. CF(1) is attached to CF(0) by a central stalk formed by the gamma and epsilon chains, while a peripheral stalk is formed by the delta and b chains.

The protein resides in the cell inner membrane. It catalyses the reaction ATP + H2O + 4 H(+)(in) = ADP + phosphate + 5 H(+)(out). Functionally, produces ATP from ADP in the presence of a proton gradient across the membrane. The catalytic sites are hosted primarily by the beta subunits. This Alkalilimnicola ehrlichii (strain ATCC BAA-1101 / DSM 17681 / MLHE-1) protein is ATP synthase subunit beta.